The sequence spans 314 residues: Porphobilinogen deaminase (314 aa).

Cys241 bears the S-(dipyrrolylmethanemethyl)cysteine mark.

This sequence belongs to the HMBS family. In terms of assembly, monomer. Requires dipyrromethane as cofactor.

The catalysed reaction is 4 porphobilinogen + H2O = hydroxymethylbilane + 4 NH4(+). Its pathway is porphyrin-containing compound metabolism; protoporphyrin-IX biosynthesis; coproporphyrinogen-III from 5-aminolevulinate: step 2/4. It participates in porphyrin-containing compound metabolism; chlorophyll biosynthesis. Its function is as follows. Tetrapolymerization of the monopyrrole PBG into the hydroxymethylbilane pre-uroporphyrinogen in several discrete steps. The protein is Porphobilinogen deaminase of Chloroherpeton thalassium (strain ATCC 35110 / GB-78).